The sequence spans 1032 residues: Vacuolar membrane protease (1032 aa).

The Cytoplasmic segment spans residues 1–11 (MKLGNPFVFRP). The chain crosses the membrane as a helical span at residues 12-32 (GPVSFWTTIVYLAIIIPLIYV). Residues 33–415 (QETVPPAPSE…SAFALRGLFA (383 aa)) lie on the Vacuolar side of the membrane. Residues N50, N138, and N147 are each glycosylated (N-linked (GlcNAc...) asparagine). 2 residues coordinate Zn(2+): H194 and D206. Residue E240 is the Proton acceptor of the active site. 3 residues coordinate Zn(2+): E241, E266, and H339. The chain crosses the membrane as a helical span at residues 416–436 (WTLTLLITTPLVLFVVTYLLV). At 437 to 469 (RDDKWYFFATKVDSTVGDGEETVSFGGWKGFVR) the chain is on the cytoplasmic side. Residues 470–490 (FPFALVVATALTIGSVFLLAK) traverse the membrane as a helical segment. Residues 491 to 493 (VNP) are Vacuolar-facing. A helical transmembrane segment spans residues 494–514 (LIIYSSGYSVWAMMISLFYFV). Over 515-532 (SWLLLRGAHFVRPSALQR) the chain is Cytoplasmic. Residues 533–553 (GFTLIWLFIITWVLSVFAAVA) form a helical membrane-spanning segment. At 554 to 560 (EDRMNMG) the chain is on the vacuolar side. A helical transmembrane segment spans residues 561–581 (AVYPLAFLHTFAFAAVLISLL). Topologically, residues 582–701 (EQYALPAKQD…WSGRLPTWTW (120 aa)) are cytoplasmic. The tract at residues 595-688 (QVSGENEEEE…RKRSFPPYEN (94 aa)) is disordered. Residues 599-608 (ENEEEEEQEQ) show a composition bias toward acidic residues. Residues 651–660 (SSEQTTTFAN) show a composition bias toward polar residues. A helical transmembrane segment spans residues 702 to 722 (FIQLLLLVPLYVTVLGNLALV). Topologically, residues 723-738 (QTTSIGKTGTDGSSLL) are vacuolar. A helical membrane pass occupies residues 739-759 (APLMGVGILAILLLLPLTPFI). Residues 760 to 766 (HRVSHHV) are Cytoplasmic-facing. A helical transmembrane segment spans residues 767 to 787 (PLFLFLVFIGTLIYNLTAFPF). Over 788–1032 (SDNNRFKFYF…VEITKKIKVA (245 aa)) the chain is Vacuolar. The N-linked (GlcNAc...) asparagine glycan is linked to N940.

It belongs to the peptidase M28 family. Requires Zn(2+) as cofactor.

The protein resides in the vacuole membrane. May be involved in vacuolar sorting and osmoregulation. The sequence is that of Vacuolar membrane protease from Metarhizium robertsii (strain ARSEF 23 / ATCC MYA-3075) (Metarhizium anisopliae (strain ARSEF 23)).